Reading from the N-terminus, the 404-residue chain is Cysteine desulfurase IscS (404 aa).

Pyridoxal 5'-phosphate-binding positions include 75–76, Asn-155, Gln-183, and 203–205; these read AT and SGH. Residue Lys-206 is modified to N6-(pyridoxal phosphate)lysine. Position 243 (Thr-243) interacts with pyridoxal 5'-phosphate. Cys-328 (cysteine persulfide intermediate) is an active-site residue. Cys-328 contributes to the [2Fe-2S] cluster binding site.

Belongs to the class-V pyridoxal-phosphate-dependent aminotransferase family. NifS/IscS subfamily. Homodimer. Forms a heterotetramer with IscU, interacts with other sulfur acceptors. It depends on pyridoxal 5'-phosphate as a cofactor.

The protein resides in the cytoplasm. The enzyme catalyses (sulfur carrier)-H + L-cysteine = (sulfur carrier)-SH + L-alanine. Its pathway is cofactor biosynthesis; iron-sulfur cluster biosynthesis. In terms of biological role, master enzyme that delivers sulfur to a number of partners involved in Fe-S cluster assembly, tRNA modification or cofactor biosynthesis. Catalyzes the removal of elemental sulfur and selenium atoms from cysteine and selenocysteine to produce alanine. Functions as a sulfur delivery protein for Fe-S cluster synthesis onto IscU, an Fe-S scaffold assembly protein, as well as other S acceptor proteins. Also functions as a selenium delivery protein in the pathway for the biosynthesis of selenophosphate. This chain is Cysteine desulfurase IscS, found in Salmonella arizonae (strain ATCC BAA-731 / CDC346-86 / RSK2980).